Reading from the N-terminus, the 1960-residue chain is Zinc finger protein 638 (1960 aa).

Residues 1-137 (MSRPRFNPRG…SPKVQSRYTK (137 aa)) form a disordered region. Residues 19–31 (APNPPGMRPPGPF) are compositionally biased toward pro residues. 3 positions are modified to asymmetric dimethylarginine: Arg-47, Arg-49, and Arg-54. Residues 60-75 (SYQNMGPQRMNVQVTQ) are compositionally biased toward polar residues. The span at 76–89 (HRTDPRLTKEKLDF) shows a compositional bias: basic and acidic residues. The segment covering 117–137 (KQSSVTQVTEQSPKVQSRYTK) has biased composition (polar residues). Residues Ser-128 and Ser-288 each carry the phosphoserine modification. Residue Lys-291 forms a Glycyl lysine isopeptide (Lys-Gly) (interchain with G-Cter in SUMO2) linkage. Phosphoserine occurs at positions 298, 367, 381, and 418. Residues 352-373 (KSVISSADAHGGPTESKKDYQS) are disordered. 3 disordered regions span residues 463–673 (NPEI…QSLS), 749–804 (PGKK…STVK), and 827–899 (KASI…KESE). Positions 468–483 (PSRRNESNRKENETPR) are enriched in basic and acidic residues. The involved in localization to nuclear speckles stretch occupies residues 470–573 (RRNESNRKEN…ERTSRKSVRS (104 aa)). Basic residues predominate over residues 484–556 (RRSHSPSPRH…SRNLLRRSPK (73 aa)). Ser-554 is subject to Phosphoserine. 2 stretches are compositionally biased toward basic and acidic residues: residues 565–583 (RTSR…EDGG) and 591–602 (EVTKQKHTETVD). Phosphoserine is present on residues Ser-606 and Ser-615. Low complexity predominate over residues 618 to 628 (KPSAKSLSSVK). Ser-637 is modified (phosphoserine). Positions 676–751 (SILLVSELPE…KSVKVCVPGK (76 aa)) constitute an RRM 1 domain. The span at 755–782 (QNKEMKKKPSDIKKSSASALKKETDASK) shows a compositional bias: basic and acidic residues. A Glycyl lysine isopeptide (Lys-Gly) (interchain with G-Cter in SUMO2) cross-link involves residue Lys-775. Over residues 783–802 (TMETVSSSSSAKSGQIKSST) the composition is skewed to low complexity. 3 stretches are compositionally biased toward basic and acidic residues: residues 838–854 (KSLE…KDSN), 867–879 (ASSE…KSAE), and 888–899 (ATEKEPVNKESE). The region spanning 902–976 (SVVFISNLPN…NQLSISMAPE (75 aa)) is the RRM 2 domain. Basic and acidic residues predominate over residues 1082–1092 (SEVQRKNDLEL). Disordered regions lie at residues 1082–1151 (SEVQ…EEPK), 1396–1420 (TVVS…PKPV), 1442–1462 (TRSG…GVNR), 1484–1527 (TKQS…KSKE), and 1550–1583 (PSQA…KGKT). A Phosphoserine modification is found at Ser-1099. Positions 1140–1151 (VHQEELGKEEPK) are enriched in basic and acidic residues. Over residues 1399-1409 (SSPKAKSTPSK) the composition is skewed to low complexity. At Ser-1400 the chain carries Phosphoserine. The segment covering 1442-1459 (TRSGLAESNSKSKPTQIG) has biased composition (polar residues). 2 stretches are compositionally biased toward basic and acidic residues: residues 1484-1503 (TKQS…DDSN) and 1518-1527 (TTDRSSKSKE). Residues Ser-1635 and Ser-1661 each carry the phosphoserine modification. Disordered regions lie at residues 1763-1898 (EVGD…SDVP) and 1930-1960 (KSTR…RSSR). Over residues 1772–1790 (NDSKVELARGKIEHHTDKK) the composition is skewed to basic and acidic residues. Lys-1804 participates in a covalent cross-link: Glycyl lysine isopeptide (Lys-Gly) (interchain with G-Cter in SUMO2). The span at 1806–1818 (DSFSQVGPGSETV) shows a compositional bias: polar residues. Positions 1819–1831 (TQKDLKTMPERHL) are enriched in basic and acidic residues. Residue Ser-1864 is modified to Phosphoserine. The segment covering 1870-1885 (AELKDSEPDEKRRKTQ) has biased composition (basic and acidic residues). The Matrin-type zinc finger occupies 1876 to 1906 (EPDEKRRKTQDSSVGKSMTSDVPGDLDFLVP). The span at 1886–1895 (DSSVGKSMTS) shows a compositional bias: polar residues. Positions 1936-1960 (QNTEKFMAKQRKEKEQNETEERSSR) are enriched in basic and acidic residues.

Interacts with FHL2. Interacts with CEBPA, CEBPD and CEBPG. Interacts with MPHOSPH8 and TASOR components of the HUSH complex; leading to recruitment of the HUSH complex. Interacts with SETDB1. Interacts with HDAC1. Interacts with HDAC4.

The protein resides in the nucleus speckle. In terms of biological role, transcription factor that binds to cytidine clusters in double-stranded DNA. Plays a key role in the silencing of unintegrated retroviral DNA: some part of the retroviral DNA formed immediately after infection remains unintegrated in the host genome and is transcriptionally repressed. Mediates transcriptional repression of unintegrated viral DNA by specifically binding to the cytidine clusters of retroviral DNA and mediating the recruitment of chromatin silencers, such as the HUSH complex, SETDB1 and the histone deacetylases HDAC1 and HDAC4. Acts as an early regulator of adipogenesis by acting as a transcription cofactor of CEBPs (CEBPA, CEBPD and/or CEBPG), controlling the expression of PPARG and probably of other proadipogenic genes, such as SREBF1. May also regulate alternative splicing of target genes during adipogenesis. This Mus musculus (Mouse) protein is Zinc finger protein 638.